A 176-amino-acid polypeptide reads, in one-letter code: ATP synthase subunit delta (176 aa).

The protein belongs to the ATPase delta chain family. As to quaternary structure, F-type ATPases have 2 components, F(1) - the catalytic core - and F(0) - the membrane proton channel. F(1) has five subunits: alpha(3), beta(3), gamma(1), delta(1), epsilon(1). F(0) has three main subunits: a(1), b(2) and c(10-14). The alpha and beta chains form an alternating ring which encloses part of the gamma chain. F(1) is attached to F(0) by a central stalk formed by the gamma and epsilon chains, while a peripheral stalk is formed by the delta and b chains.

It is found in the cell inner membrane. Functionally, f(1)F(0) ATP synthase produces ATP from ADP in the presence of a proton or sodium gradient. F-type ATPases consist of two structural domains, F(1) containing the extramembraneous catalytic core and F(0) containing the membrane proton channel, linked together by a central stalk and a peripheral stalk. During catalysis, ATP synthesis in the catalytic domain of F(1) is coupled via a rotary mechanism of the central stalk subunits to proton translocation. In terms of biological role, this protein is part of the stalk that links CF(0) to CF(1). It either transmits conformational changes from CF(0) to CF(1) or is implicated in proton conduction. The protein is ATP synthase subunit delta of Actinobacillus succinogenes (strain ATCC 55618 / DSM 22257 / CCUG 43843 / 130Z).